The chain runs to 414 residues: COUP transcription factor 2 (414 aa).

The segment at 1–72 is disordered; that stretch reads MAMVVSTWRD…PGGPGSDKQQ (72 aa). The segment covering 27–37 has biased composition (pro residues); that stretch reads PPVPGPPPGAP. The span at 38–54 shows a compositional bias: low complexity; the sequence is HTPQTPGQGGPASTPAQ. Phosphothreonine is present on Thr51. Residues 76 to 151 constitute a DNA-binding region (nuclear receptor); the sequence is HIECVVCGDK…VGMRREAVQR (76 aa). 2 NR C4-type zinc fingers span residues 79–99 and 115–139; these read CVVC…CEGC and CRAN…LKKC. The interaction with ZFPM2 stretch occupies residues 117–414; the sequence is ANRNCPIDQH…SFNWPYMAIQ (298 aa). The NR LBD domain occupies 177 to 403; that stretch reads YLSGYISLLL…TLIRDMLLSG (227 aa). The tract at residues 337-414 is important for dimerization; it reads LQEKSQCALE…SFNWPYMAIQ (78 aa).

The protein belongs to the nuclear hormone receptor family. NR2 subfamily. As to quaternary structure, interacts with SQSTM1. Binds DNA as a dimer; homodimer or heterodimer with NR2F6. Interacts with NCOA1, NCOA2, NCOA3 and PPARGC1A. Interacts with ZFPM2.

It localises to the nucleus. In terms of biological role, ligand-activated transcription factor. Activated by high concentrations of 9-cis-retinoic acid and all-trans-retinoic acid, but not by dexamethasone, cortisol or progesterone (in vitro). Regulation of the apolipoprotein A-I gene transcription. Binds to DNA site A. May be required to establish ovary identity during early gonad development. The sequence is that of COUP transcription factor 2 (Nr2f2) from Rattus norvegicus (Rat).